The primary structure comprises 497 residues: Endoglucanase 17 (497 aa).

The N-terminal stretch at 1–21 (MAAAGGAVLLLVLATATSVTG) is a signal peptide. Asp77 acts as the Nucleophile in catalysis. Residue His406 is part of the active site. Asn451 carries N-linked (GlcNAc...) asparagine glycosylation. Residues Asp458 and Glu467 contribute to the active site.

It belongs to the glycosyl hydrolase 9 (cellulase E) family.

It is found in the secreted. The enzyme catalyses Endohydrolysis of (1-&gt;4)-beta-D-glucosidic linkages in cellulose, lichenin and cereal beta-D-glucans.. The sequence is that of Endoglucanase 17 (GLU13) from Oryza sativa subsp. japonica (Rice).